A 239-amino-acid chain; its full sequence is Purine nucleoside phosphorylase DeoD-type 1 (239 aa).

An a purine D-ribonucleoside-binding site is contributed by H5. Phosphate is bound by residues G21, R25, R44, and 88-91 (RVGS). Residues 180 to 182 (EME) and 204 to 205 (SD) contribute to the a purine D-ribonucleoside site. Residue D205 is the Proton donor of the active site.

It belongs to the PNP/UDP phosphorylase family. In terms of assembly, homohexamer; trimer of homodimers.

It catalyses the reaction a purine D-ribonucleoside + phosphate = a purine nucleobase + alpha-D-ribose 1-phosphate. The enzyme catalyses a purine 2'-deoxy-D-ribonucleoside + phosphate = a purine nucleobase + 2-deoxy-alpha-D-ribose 1-phosphate. Functionally, catalyzes the reversible phosphorolytic breakdown of the N-glycosidic bond in the beta-(deoxy)ribonucleoside molecules, with the formation of the corresponding free purine bases and pentose-1-phosphate. This is Purine nucleoside phosphorylase DeoD-type 1 from Vibrio vulnificus (strain CMCP6).